Reading from the N-terminus, the 872-residue chain is Protein SCD5 (872 aa).

Disordered regions lie at residues 1 to 98 and 209 to 239; these read MSFD…SGGD and PKPRPILSSENHEEVYEEVEDDDSSAKTGDQ. A compositionally biased stretch (polar residues) spans 48–85; sequence FWDQGSRSHSDTTLSYRNNHSNTAADNATNVSSPQKDN. The short motif at 272–276 is the KKRVK motif; Required for interaction with GLC7, endocytosis and actin cytoskeleton organization element; that stretch reads KKVRF. Disordered regions lie at residues 280–321 and 338–358; these read ITFQ…LDFT and SGLVSSLPSEQQETEEEKKVL. 2 stretches are compositionally biased toward polar residues: residues 284–296 and 339–348; these read DPPNLNQESSNNS and GLVSSLPSEQ. A run of 12 repeats spans residues 405-424, 439-458, 479-498, 534-545, 564-575, 593-604, 608-619, 623-634, 636-647, 650-661, 683-694, and 717-728. Residues 405–448 form a 3 X 20 AA approximate repeats region; that stretch reads QLPLEPLKPTATGSANHLVREEYNQGLHPSNGAIQTGLQPLKPT. Residues T416 and T450 each carry the phosphothreonine; by PRK1 modification. The interval 460 to 489 is disordered; it reads HMEQPQSIKPSSTPETVTNSGGLQPLKPTA. Over residues 462-481 the composition is skewed to polar residues; it reads EQPQSIKPSSTPETVTNSGG. The residue at position 490 (T490) is a Phosphothreonine; by PRK1. Disordered stretches follow at residues 516 to 571 and 591 to 620; these read QFTN…TYSN and AFPPQNTLPQHQQSHLLSPQNTIPQHQRSQ. The interval 534-728 is 9 X 12 AA approximate repeats; it reads SPNITLPQSN…QNAANSYFQS (195 aa). Residue S564 is modified to Phosphoserine. A compositionally biased stretch (polar residues) spans 594-620; the sequence is PQNTLPQHQQSHLLSPQNTIPQHQRSQ. The interval 649-681 is disordered; it reads ISPQNTYTNNQQQPQHLPPPPPPRAQQQQQGAI. Residues 651 to 663 show a composition bias toward low complexity; the sequence is PQNTYTNNQQQPQ. Residues 697 to 727 show a composition bias toward polar residues; that stretch reads LVPTQPSYTNSPSIQSPNFLSPQNAANSYFQ. Disordered stretches follow at residues 697 to 758 and 806 to 838; these read LVPT…ISSF and NSDIHSQPNKPNYGMLGQQVHQQQQQQQQQFPF. A compositionally biased stretch (low complexity) spans 728 to 745; the sequence is SLLSSSPSPNPTPSNAST. Composition is skewed to polar residues over residues 746–758 and 806–815; these read VNGNNASNGISSF and NSDIHSQPNK. Over residues 823–835 the composition is skewed to low complexity; sequence QQVHQQQQQQQQQ.

As to quaternary structure, interacts (via KKVRF motif) with phosphatase GLC7. Phosphorylation by PRK1 and/or AKL1 on Thr-416, Thr-450 and Thr-490 of repeats 1-1, 1-2 and/or 1-3 negatively regulates SCD5 function in endocytosis and actin cytoskeleton organization.

It localises to the membrane. Regulates both fluid phase and receptor-mediated endocytosis. Involved in vesicular transport at a late stage of the secretory pathway. Regulates actin cytoskeleton organization. In Saccharomyces cerevisiae (strain ATCC 204508 / S288c) (Baker's yeast), this protein is Protein SCD5 (SCD5).